Consider the following 476-residue polypeptide: Aspartyl/glutamyl-tRNA(Asn/Gln) amidotransferase subunit B (476 aa).

The protein belongs to the GatB/GatE family. GatB subfamily. In terms of assembly, heterotrimer of A, B and C subunits.

The catalysed reaction is L-glutamyl-tRNA(Gln) + L-glutamine + ATP + H2O = L-glutaminyl-tRNA(Gln) + L-glutamate + ADP + phosphate + H(+). The enzyme catalyses L-aspartyl-tRNA(Asn) + L-glutamine + ATP + H2O = L-asparaginyl-tRNA(Asn) + L-glutamate + ADP + phosphate + 2 H(+). In terms of biological role, allows the formation of correctly charged Asn-tRNA(Asn) or Gln-tRNA(Gln) through the transamidation of misacylated Asp-tRNA(Asn) or Glu-tRNA(Gln) in organisms which lack either or both of asparaginyl-tRNA or glutaminyl-tRNA synthetases. The reaction takes place in the presence of glutamine and ATP through an activated phospho-Asp-tRNA(Asn) or phospho-Glu-tRNA(Gln). This chain is Aspartyl/glutamyl-tRNA(Asn/Gln) amidotransferase subunit B, found in Vesicomyosocius okutanii subsp. Calyptogena okutanii (strain HA).